We begin with the raw amino-acid sequence, 233 residues long: Adenosylcobinamide-GDP ribazoletransferase (233 aa).

Helical transmembrane passes span 24-44 (LWAL…VLYL), 46-66 (LPLS…LLHL), 96-116 (IAGV…LPLL), 117-137 (PFYA…LALA), 158-178 (QLTL…YIEP), 181-198 (ISSL…RLSL), and 209-229 (IGAV…VVWV).

The protein belongs to the CobS family. The cofactor is Mg(2+).

The protein localises to the cell membrane. It catalyses the reaction alpha-ribazole + adenosylcob(III)inamide-GDP = adenosylcob(III)alamin + GMP + H(+). The catalysed reaction is alpha-ribazole 5'-phosphate + adenosylcob(III)inamide-GDP = adenosylcob(III)alamin 5'-phosphate + GMP + H(+). Its pathway is cofactor biosynthesis; adenosylcobalamin biosynthesis; adenosylcobalamin from cob(II)yrinate a,c-diamide: step 7/7. In terms of biological role, joins adenosylcobinamide-GDP and alpha-ribazole to generate adenosylcobalamin (Ado-cobalamin). Also synthesizes adenosylcobalamin 5'-phosphate from adenosylcobinamide-GDP and alpha-ribazole 5'-phosphate. The sequence is that of Adenosylcobinamide-GDP ribazoletransferase from Thermococcus gammatolerans (strain DSM 15229 / JCM 11827 / EJ3).